A 1101-amino-acid chain; its full sequence is Nuclear pore complex protein NUP107 (1101 aa).

Belongs to the nucleoporin Nup84/Nup107 family. As to quaternary structure, part of the nuclear pore complex (NPC). The NPC has an eight-fold symmetrical structure comprising a central transport channel and two rings, the cytoplasmic and nuclear rings, to which eight filaments are attached. The cytoplasmic filaments have loose ends, while the nuclear filaments are joined in a distal ring, forming a nuclear basket. NPCs are highly dynamic in configuration and composition, and can be devided in 3 subcomplexes, the NUP62 subcomplex, the NUP107-160 subcomplex and the NUP93 subcomplex, containing approximately 30 different nucleoporin proteins.

The protein resides in the nucleus envelope. It is found in the nucleus. The protein localises to the nuclear pore complex. The sequence is that of Nuclear pore complex protein NUP107 from Arabidopsis thaliana (Mouse-ear cress).